A 384-amino-acid chain; its full sequence is GDSL esterase/lipase At1g28670 (384 aa).

A signal peptide spans 1-24; sequence MASSLKKLISSFLLVLYSTTIIVA. The active-site Nucleophile is the Ser-42. Asn-105, Asn-138, and Asn-321 each carry an N-linked (GlcNAc...) asparagine glycan. Catalysis depends on residues Asp-346 and His-349.

The protein belongs to the 'GDSL' lipolytic enzyme family.

The protein resides in the secreted. This Arabidopsis thaliana (Mouse-ear cress) protein is GDSL esterase/lipase At1g28670.